Consider the following 280-residue polypeptide: Ribosomal RNA small subunit methyltransferase A (280 aa).

S-adenosyl-L-methionine contacts are provided by Asn27, Leu29, Gly54, Glu76, Asp102, and Asn122.

The protein belongs to the class I-like SAM-binding methyltransferase superfamily. rRNA adenine N(6)-methyltransferase family. RsmA subfamily.

The protein resides in the cytoplasm. It carries out the reaction adenosine(1518)/adenosine(1519) in 16S rRNA + 4 S-adenosyl-L-methionine = N(6)-dimethyladenosine(1518)/N(6)-dimethyladenosine(1519) in 16S rRNA + 4 S-adenosyl-L-homocysteine + 4 H(+). Functionally, specifically dimethylates two adjacent adenosines (A1518 and A1519) in the loop of a conserved hairpin near the 3'-end of 16S rRNA in the 30S particle. May play a critical role in biogenesis of 30S subunits. The polypeptide is Ribosomal RNA small subunit methyltransferase A (Oleidesulfovibrio alaskensis (strain ATCC BAA-1058 / DSM 17464 / G20) (Desulfovibrio alaskensis)).